Reading from the N-terminus, the 180-residue chain is Outer-membrane lipoprotein LolB (180 aa).

An N-terminal signal peptide occupies residues 1–16 (MIRRVLLLSLALLLAG). C17 carries the N-palmitoyl cysteine lipid modification. C17 carries S-diacylglycerol cysteine lipidation.

This sequence belongs to the LolB family. In terms of assembly, monomer.

Its subcellular location is the cell outer membrane. Its function is as follows. Plays a critical role in the incorporation of lipoproteins in the outer membrane after they are released by the LolA protein. The protein is Outer-membrane lipoprotein LolB of Chromobacterium violaceum (strain ATCC 12472 / DSM 30191 / JCM 1249 / CCUG 213 / NBRC 12614 / NCIMB 9131 / NCTC 9757 / MK).